Reading from the N-terminus, the 344-residue chain is Protein RecA (344 aa).

66-73 (GPESSGKT) serves as a coordination point for ATP.

This sequence belongs to the RecA family.

Its subcellular location is the cytoplasm. Can catalyze the hydrolysis of ATP in the presence of single-stranded DNA, the ATP-dependent uptake of single-stranded DNA by duplex DNA, and the ATP-dependent hybridization of homologous single-stranded DNAs. It interacts with LexA causing its activation and leading to its autocatalytic cleavage. This is Protein RecA from Methylobacillus flagellatus (strain ATCC 51484 / DSM 6875 / VKM B-1610 / KT).